The chain runs to 213 residues: Kynurenine formamidase (213 aa).

Substrate is bound at residue Trp-18. Residues His-48, His-52, and Asp-54 each contribute to the Zn(2+) site. Catalysis depends on His-58, which acts as the Proton donor/acceptor. Zn(2+)-binding residues include His-160 and Glu-172.

The protein belongs to the Cyclase 1 superfamily. KynB family. In terms of assembly, homodimer. Requires Zn(2+) as cofactor.

It catalyses the reaction N-formyl-L-kynurenine + H2O = L-kynurenine + formate + H(+). It functions in the pathway amino-acid degradation; L-tryptophan degradation via kynurenine pathway; L-kynurenine from L-tryptophan: step 2/2. Its function is as follows. Catalyzes the hydrolysis of N-formyl-L-kynurenine to L-kynurenine, the second step in the kynurenine pathway of tryptophan degradation. This Burkholderia pseudomallei (strain 668) protein is Kynurenine formamidase.